Reading from the N-terminus, the 436-residue chain is Proteasome-activating nucleotidase (436 aa).

Residues 7–98 (KDVRDLCEKF…LRSDLQRMKK (92 aa)) adopt a coiled-coil conformation. ATP-binding positions include 223-228 (GTGKTL) and His-362. The interval 434–436 (AYH) is docks into pockets in the proteasome alpha-ring to cause gate opening.

This sequence belongs to the AAA ATPase family. As to quaternary structure, homohexamer. The hexameric complex has a two-ring architecture resembling a top hat that caps the 20S proteasome core at one or both ends. Upon ATP-binding, the C-terminus of PAN interacts with the alpha-rings of the proteasome core by binding to the intersubunit pockets.

Its subcellular location is the cytoplasm. In terms of biological role, ATPase which is responsible for recognizing, binding, unfolding and translocation of substrate proteins into the archaeal 20S proteasome core particle. Is essential for opening the gate of the 20S proteasome via an interaction with its C-terminus, thereby allowing substrate entry and access to the site of proteolysis. Thus, the C-termini of the proteasomal ATPase function like a 'key in a lock' to induce gate opening and therefore regulate proteolysis. Unfolding activity requires energy from ATP hydrolysis, whereas ATP binding alone promotes ATPase-20S proteasome association which triggers gate opening, and supports translocation of unfolded substrates. In Methanopyrus kandleri (strain AV19 / DSM 6324 / JCM 9639 / NBRC 100938), this protein is Proteasome-activating nucleotidase.